Consider the following 116-residue polypeptide: Ribosome-binding factor A (116 aa).

The protein belongs to the RbfA family. In terms of assembly, monomer. Binds 30S ribosomal subunits, but not 50S ribosomal subunits or 70S ribosomes.

It localises to the cytoplasm. One of several proteins that assist in the late maturation steps of the functional core of the 30S ribosomal subunit. Associates with free 30S ribosomal subunits (but not with 30S subunits that are part of 70S ribosomes or polysomes). Required for efficient processing of 16S rRNA. May interact with the 5'-terminal helix region of 16S rRNA. This Buchnera aphidicola subsp. Cinara cedri (strain Cc) protein is Ribosome-binding factor A.